The following is a 771-amino-acid chain: Solute carrier family 7 member 14 (771 aa).

6 consecutive transmembrane segments (helical) span residues 58–78 (LISL…SGLV), 83–103 (AGPG…LSGV), 130–150 (FVAF…TAAG), 187–207 (YPDL…ALGV), 216–236 (VLNV…FFFI), and 251–271 (WSGV…FDII). Asn-282 carries an N-linked (GlcNAc...) asparagine glycan. Helical transmembrane passes span 291-311 (ASLV…TLMV), 336-356 (FVVA…SLFP), 360-380 (VIYA…VSSY), 384-404 (PVVA…LVSL), and 407-427 (LIEM…VCVL). 3 positions are modified to phosphoserine: Ser-465, Ser-468, and Ser-488. 4 helical membrane-spanning segments follow: residues 565 to 585 (VTIC…FIIF), 596 to 616 (WAIL…FVIL), 628 to 648 (MAPC…YLML), and 655 to 675 (WIRF…YGIW). N-linked (GlcNAc...) asparagine glycosylation occurs at Asn-676. The tract at residues 712–771 (TEGESQENWGGPAEDKGFYYQQMSDTQPNTRTSSKAKSKSKHKQNSEALIANDELDYSPE) is disordered. Over residues 732 to 743 (QQMSDTQPNTRT) the composition is skewed to polar residues. Residues 745-754 (SKAKSKSKHK) show a composition bias toward basic residues. Residues Ser-757 and Ser-769 each carry the phosphoserine modification.

This sequence belongs to the amino acid-polyamine-organocation (APC) superfamily. Cationic amino acid transporter (CAT) (TC 2.A.3.3) family.

It localises to the lysosome membrane. The enzyme catalyses 4-aminobutanoate(in) = 4-aminobutanoate(out). Its function is as follows. Imports 4-aminobutanoate (GABA) into lysosomes. May act as a GABA sensor that regulates mTORC2-dependent INS signaling and gluconeogenesis. The transport mechanism and substrate selectivity remain to be elucidated. This Bos taurus (Bovine) protein is Solute carrier family 7 member 14.